Consider the following 201-residue polypeptide: 3-isopropylmalate dehydratase small subunit (201 aa).

Belongs to the LeuD family. LeuD type 1 subfamily. Heterodimer of LeuC and LeuD.

It catalyses the reaction (2R,3S)-3-isopropylmalate = (2S)-2-isopropylmalate. It participates in amino-acid biosynthesis; L-leucine biosynthesis; L-leucine from 3-methyl-2-oxobutanoate: step 2/4. Functionally, catalyzes the isomerization between 2-isopropylmalate and 3-isopropylmalate, via the formation of 2-isopropylmaleate. The chain is 3-isopropylmalate dehydratase small subunit from Escherichia coli O157:H7.